We begin with the raw amino-acid sequence, 788 residues long: Integrin beta-6 (788 aa).

A signal peptide spans 1–21 (MGIELLCFFFLFLGRDDHVRG). Residues 22–71 (GCAMEGAETCGDCLLIGPQCAWCSQENFTHPSGVSERCDTPANLLAKGCQ) form the PSI domain. The Extracellular segment spans residues 22–709 (GCAMEGAETC…KDCPKPPNIP (688 aa)). 19 disulfides stabilise this stretch: cysteine 23–cysteine 41, cysteine 31–cysteine 454, cysteine 34–cysteine 59, cysteine 44–cysteine 70, cysteine 197–cysteine 204, cysteine 252–cysteine 293, cysteine 394–cysteine 406, cysteine 426–cysteine 452, cysteine 456–cysteine 476, cysteine 467–cysteine 479, cysteine 481–cysteine 490, cysteine 492–cysteine 519, cysteine 502–cysteine 517, cysteine 511–cysteine 522, cysteine 524–cysteine 537, cysteine 539–cysteine 560, cysteine 544–cysteine 558, cysteine 552–cysteine 563, and cysteine 565–cysteine 574. 2 N-linked (GlcNAc...) asparagine glycosylation sites follow: asparagine 48 and asparagine 97. The region spanning 131 to 371 (YPVDLYYLMD…QLIISAYEEL (241 aa)) is the VWFA domain. Residues aspartate 140, serine 142, and serine 144 each coordinate Mg(2+). Ca(2+)-binding residues include serine 144, aspartate 147, aspartate 148, and glutamate 179. Asparagine 235, aspartate 237, proline 239, and glutamate 240 together coordinate Ca(2+). A Mg(2+)-binding site is contributed by glutamate 240. The N-linked (GlcNAc...) asparagine glycan is linked to asparagine 260. Ca(2+) contacts are provided by aspartate 271 and lysine 355. 3 N-linked (GlcNAc...) asparagine glycosylation sites follow: asparagine 387, asparagine 396, and asparagine 418. 4 consecutive I-EGF domains span residues 456-491 (CQKE…PHCE), 492-538 (CGED…PYCQ), 539-575 (CDNF…EYCN), and 576-615 (CTTS…PTCE). Asparagine 463 and asparagine 471 each carry an N-linked (GlcNAc...) asparagine glycan. The N-linked (GlcNAc...) asparagine glycan is linked to asparagine 541. An N-linked (GlcNAc...) asparagine glycan is attached at asparagine 575. 9 cysteine pairs are disulfide-bonded: cysteine 576–cysteine 599, cysteine 583–cysteine 597, cysteine 591–cysteine 602, cysteine 604–cysteine 614, cysteine 617–cysteine 620, cysteine 624–cysteine 670, cysteine 630–cysteine 649, cysteine 633–cysteine 645, and cysteine 678–cysteine 702. Asparagine 696 carries N-linked (GlcNAc...) asparagine glycosylation. Residues 710-730 (MIMLGVSLAILLIGVVLLCIW) form a helical membrane-spanning segment. The interaction with HAX1 stretch occupies residues 731–758 (KLLVSFHDRKEVAKFEAERSKAKWQTGT). Residues 731–788 (KLLVSFHDRKEVAKFEAERSKAKWQTGTNPLYRGSTSTFKNVTYKHRDKLKTDLSTDG) are Cytoplasmic-facing.

It belongs to the integrin beta chain family. Heterodimer of an alpha and a beta subunit. Interacts with FLNB. Interacts with HAX1. ITGAV:ITGB6 interacts with FBN1. ITGAV:ITGB6 interacts with TGFB1.

The protein resides in the cell membrane. It localises to the cell junction. Its subcellular location is the focal adhesion. Its function is as follows. Integrin alpha-V:beta-6 (ITGAV:ITGB6) is a receptor for fibronectin and cytotactin. It recognizes the sequence R-G-D in its ligands. ITGAV:ITGB6 acts as a receptor for fibrillin-1 (FBN1) and mediates R-G-D-dependent cell adhesion to FBN1. Integrin alpha-V:beta-6 (ITGAV:ITGB6) mediates R-G-D-dependent release of transforming growth factor beta-1 (TGF-beta-1) from regulatory Latency-associated peptide (LAP), thereby playing a key role in TGF-beta-1 activation. This Cavia porcellus (Guinea pig) protein is Integrin beta-6 (ITGB6).